The sequence spans 233 residues: uncharacterized protein (233 aa).

The the nascent chain stimulates ribosomal stalling during translation by interfering with the conformation of the peptidyl transferase center (PTC), and the translating mRNA by adopting a difficult-to-decode structure at the ribosome decoding center stretch occupies residues 196 to 212 (FFYEDYLIFDCRAKRRK).

In terms of biological role, acts as an endogenous target of the ribosome quality control (RQC) pathway. During translation, the nascent chain has a propensity to stall ribosomes, thereby stimulating activation of the RQC pathway. This is an uncharacterized protein from Saccharomyces cerevisiae (strain ATCC 204508 / S288c) (Baker's yeast).